We begin with the raw amino-acid sequence, 225 residues long: Imidazole glycerol phosphate synthase subunit HisH (225 aa).

In terms of domain architecture, Glutamine amidotransferase type-1 spans Thr-3–Pro-225. Cys-82 serves as the catalytic Nucleophile. Residues His-205 and Glu-207 contribute to the active site.

Heterodimer of HisH and HisF.

It localises to the cytoplasm. The catalysed reaction is 5-[(5-phospho-1-deoxy-D-ribulos-1-ylimino)methylamino]-1-(5-phospho-beta-D-ribosyl)imidazole-4-carboxamide + L-glutamine = D-erythro-1-(imidazol-4-yl)glycerol 3-phosphate + 5-amino-1-(5-phospho-beta-D-ribosyl)imidazole-4-carboxamide + L-glutamate + H(+). The enzyme catalyses L-glutamine + H2O = L-glutamate + NH4(+). It participates in amino-acid biosynthesis; L-histidine biosynthesis; L-histidine from 5-phospho-alpha-D-ribose 1-diphosphate: step 5/9. Functionally, IGPS catalyzes the conversion of PRFAR and glutamine to IGP, AICAR and glutamate. The HisH subunit catalyzes the hydrolysis of glutamine to glutamate and ammonia as part of the synthesis of IGP and AICAR. The resulting ammonia molecule is channeled to the active site of HisF. This is Imidazole glycerol phosphate synthase subunit HisH from Bordetella bronchiseptica (strain ATCC BAA-588 / NCTC 13252 / RB50) (Alcaligenes bronchisepticus).